The following is a 215-amino-acid chain: Adenylate kinase (215 aa).

10–15 lines the ATP pocket; sequence GAGKGT. The tract at residues 30–59 is NMP; the sequence is STGDMLRAAVKAGSPLGLKVKGVMDSGGLV. AMP contacts are provided by residues Thr31, Arg36, 57 to 59, 85 to 88, and Gln92; these read GLV and GFPR. Positions 122 to 159 are LID; the sequence is GRRVHAASGRVYHDLHNPPKVAGKDDETGEDLIQREDD. Residues Arg123 and 132 to 133 contribute to the ATP site; that span reads VY. AMP is bound by residues Arg156 and Arg167. Gly201 lines the ATP pocket.

This sequence belongs to the adenylate kinase family. As to quaternary structure, monomer.

The protein resides in the cytoplasm. It catalyses the reaction AMP + ATP = 2 ADP. The protein operates within purine metabolism; AMP biosynthesis via salvage pathway; AMP from ADP: step 1/1. Catalyzes the reversible transfer of the terminal phosphate group between ATP and AMP. Plays an important role in cellular energy homeostasis and in adenine nucleotide metabolism. The chain is Adenylate kinase from Azotobacter vinelandii (strain DJ / ATCC BAA-1303).